A 759-amino-acid polypeptide reads, in one-letter code: Solute carrier family 26 member 6 (759 aa).

The Cytoplasmic segment spans residues 1–115 (MGLADASGPR…PQGLAYALLA (115 aa)). Residues 116 to 136 (GLPPVFGLYSSFYPVFIYFLF) form a helical membrane-spanning segment. The Extracellular portion of the chain corresponds to 137-186 (GTSRHISVGTFAVMSVMVGSVTESLAPQALNDSMINETARDAARVQVAST). N-linked (GlcNAc) asparagine glycans are attached at residues Asn-167 and Asn-172. Residues 187–207 (LSVLVGLFQVGLGLIHFGFVV) form a helical membrane-spanning segment. Topologically, residues 208–263 (TYLSEPLVRGYTTAAAVQVFVSQLKYVFGLHLSSHSGPLSLIYTVLEVCWKLPQSK) are cytoplasmic. The chain crosses the membrane as a helical span at residues 264–284 (VGTVVTAAVAGVVLVVVKLLN). At 285–293 (DKLQQQLPM) the chain is on the extracellular side. Residues 294–314 (PIPGELLTLIGATGISYGMGL) traverse the membrane as a helical segment. Residues 315-347 (KHRFEVDVVGNIPAGLVPPVAPNTQLFSKLVGS) lie on the Cytoplasmic side of the membrane. The helical transmembrane segment at 348 to 368 (AFTIAVVGFAIAISLGKIFAL) threads the bilayer. The Extracellular portion of the chain corresponds to 369–379 (RHGYRVDSNQE). Residues 380 to 400 (LVALGLSNLIGGIFQCFPVSC) form a helical membrane-spanning segment. At 401 to 416 (SMSRSLVQESTGGNSQ) the chain is on the cytoplasmic side. A helical membrane pass occupies residues 417-437 (VAGAISSLFILLIIVKLGELF). The Extracellular portion of the chain corresponds to 438 to 484 (HDLPKAVLAAIIIVNLKGMLRQLSDMRSLWKANRADLLIWLVTFTAT). Residues 485 to 505 (ILLNLDLGLVVAVIFSLLLVV) form a helical membrane-spanning segment. The Cytoplasmic portion of the chain corresponds to 506-759 (VRTQMPHYSV…PDSPVSVTRL (254 aa)). An STAS domain is found at 530–742 (EYSEAKEVRG…ASVHDAVTFA (213 aa)). Phosphoserine; by PKC is present on residues Asn-553 and Lys-582. Ser-616 is modified (phosphoserine). The tract at residues 636 to 657 (GDKMEDATANGQEDSKAPDGST) is disordered. Phosphoserine occurs at positions 752 and 755.

It belongs to the SLC26A/SulP transporter (TC 2.A.53) family. Interacts (via C-terminal domain) with PDZK1 (via C-terminal PDZ domain); the interaction induces chloride and oxalate exchange transport. Interacts with CFTR and SLC26A3. Interacts with AHCYL1; the interaction increases SLC26A6 activity. In terms of assembly, interacts with NHERF1 (via the PDZ domains) and NHERF2 (via the PDZ domains). Interacts (via C-terminal cytoplasmic domain) with CA2; the interaction stimulates chloride-bicarbonate exchange activity. As to quaternary structure, interacts with NHERF1 (via the PDZ domains) and NHERF2 (via the PDZ domains). Post-translationally, phosphorylated on serine residues by PKC; the phosphorylation disrupts interaction with carbonic anhydrase CA2 and reduces bicarbonate transport activity in a phorbol myristate acetate (PMA)-induced manner. In terms of processing, glycosylation at Asn-167 and Asn-172 positively regulates its chloride oxalate exchanger activity. As to expression, ubiquitous. Highest levels in kidney and pancreas. Lower expression in heart, skeletal muscle, liver and placenta. Also found in lung and brain. In terms of tissue distribution, ubiquitously expressed. Highest levels expressed in the kidney and pancreas. Expressed weakly in placenta, lung, liver and pancreas. As to expression, expressed in heart, brain, placenta, lung, liver, kidney, pancreas, spleen, thymus, prostate, testis and ovary.

It localises to the cell membrane. Its subcellular location is the apical cell membrane. The protein localises to the cytoplasmic vesicle membrane. The protein resides in the microsome. It is found in the basolateral cell membrane. The enzyme catalyses 2 hydrogencarbonate(in) + chloride(out) = 2 hydrogencarbonate(out) + chloride(in). The catalysed reaction is oxalate(in) + chloride(out) = oxalate(out) + chloride(in). It carries out the reaction oxalate(in) + formate(out) = oxalate(out) + formate(in). It catalyses the reaction oxalate(in) + sulfate(out) = oxalate(out) + sulfate(in). The enzyme catalyses 2 hydrogencarbonate(out) + sulfate(in) = 2 hydrogencarbonate(in) + sulfate(out). Its activity is regulated as follows. Oxalate transport activity is inhibited by 4,4'-diisothiocyanatostilbene-2,2'-disulfonic acid (DIDS). Chloride, bicarbonate and sulfate transport activities are inhibited by 4,4'-diisothiocyanatostilbene-2,2'-disulfonic acid (DIDS). In terms of biological role, apical membrane anion-exchanger with wide epithelial distribution that plays a role as a component of the pH buffering system for maintaining acid-base homeostasis. Acts as a versatile DIDS-sensitive inorganic and organic anion transporter that mediates the uptake of monovalent anions like chloride, bicarbonate, formate and hydroxyl ion and divalent anions like sulfate and oxalate. Functions in multiple exchange modes involving pairs of these anions, which include chloride-bicarbonate, chloride-oxalate, oxalate-formate, oxalate-sulfate and chloride-formate exchange. Apical membrane chloride-bicarbonate exchanger that mediates luminal chloride absorption and bicarbonate secretion by the small intestinal brush border membrane and contributes to intracellular pH regulation in the duodenal upper villous epithelium during proton-coupled peptide absorption, possibly by providing a bicarbonate import pathway. Also mediates intestinal chloride absorption and oxalate secretion, thereby preventing hyperoxaluria and calcium oxalate urolithiasis. Transepithelial oxalate secretion, chloride-formate, chloride-oxalate and chloride-bicarbonate transport activities in the duodenum are inhibited by PKC activation in a calcium-independent manner. The apical membrane chloride-bicarbonate exchanger also provides a major route for fluid and bicarbonate secretion into the proximal tubules of the kidney as well as into the proximal part of the interlobular pancreatic ductal tree, where it mediates electrogenic chloride-bicarbonate exchange with a chloride-bicarbonate stoichiometry of 1:2, and hence will dilute and alkalinize protein-rich acinar secretion. Also mediates the transcellular sulfate absorption and oxalate secretion across the apical membrane in the duodenum and the formate ion efflux at the apical brush border of cells in the proximal tubules of kidney. Plays a role in sperm capacitation by increasing intracellular pH. Its function is as follows. Apical membrane chloride-bicarbonate exchanger. Its association with carbonic anhydrase CA2 forms a bicarbonate transport metabolon; hence maximizes the local concentration of bicarbonate at the transporter site. This is Solute carrier family 26 member 6 (SLC26A6) from Homo sapiens (Human).